A 376-amino-acid polypeptide reads, in one-letter code: UDP-N-acetylglucosamine--N-acetylmuramyl-(pentapeptide) pyrophosphoryl-undecaprenol N-acetylglucosamine transferase (376 aa).

Residues 11–13 (TGG), Asn-117, Arg-160, Ser-208, and Gln-310 each bind UDP-N-acetyl-alpha-D-glucosamine.

This sequence belongs to the glycosyltransferase 28 family. MurG subfamily.

It is found in the cell inner membrane. The catalysed reaction is di-trans,octa-cis-undecaprenyl diphospho-N-acetyl-alpha-D-muramoyl-L-alanyl-D-glutamyl-meso-2,6-diaminopimeloyl-D-alanyl-D-alanine + UDP-N-acetyl-alpha-D-glucosamine = di-trans,octa-cis-undecaprenyl diphospho-[N-acetyl-alpha-D-glucosaminyl-(1-&gt;4)]-N-acetyl-alpha-D-muramoyl-L-alanyl-D-glutamyl-meso-2,6-diaminopimeloyl-D-alanyl-D-alanine + UDP + H(+). The protein operates within cell wall biogenesis; peptidoglycan biosynthesis. Its function is as follows. Cell wall formation. Catalyzes the transfer of a GlcNAc subunit on undecaprenyl-pyrophosphoryl-MurNAc-pentapeptide (lipid intermediate I) to form undecaprenyl-pyrophosphoryl-MurNAc-(pentapeptide)GlcNAc (lipid intermediate II). This is UDP-N-acetylglucosamine--N-acetylmuramyl-(pentapeptide) pyrophosphoryl-undecaprenol N-acetylglucosamine transferase from Rickettsia conorii (strain ATCC VR-613 / Malish 7).